Reading from the N-terminus, the 264-residue chain is DNA repair protein RecO (264 aa).

Belongs to the RecO family.

Involved in DNA repair and RecF pathway recombination. The chain is DNA repair protein RecO from Chlorobium luteolum (strain DSM 273 / BCRC 81028 / 2530) (Pelodictyon luteolum).